The following is a 165-amino-acid chain: SsrA-binding protein (165 aa).

The protein belongs to the SmpB family.

Its subcellular location is the cytoplasm. Its function is as follows. Required for rescue of stalled ribosomes mediated by trans-translation. Binds to transfer-messenger RNA (tmRNA), required for stable association of tmRNA with ribosomes. tmRNA and SmpB together mimic tRNA shape, replacing the anticodon stem-loop with SmpB. tmRNA is encoded by the ssrA gene; the 2 termini fold to resemble tRNA(Ala) and it encodes a 'tag peptide', a short internal open reading frame. During trans-translation Ala-aminoacylated tmRNA acts like a tRNA, entering the A-site of stalled ribosomes, displacing the stalled mRNA. The ribosome then switches to translate the ORF on the tmRNA; the nascent peptide is terminated with the 'tag peptide' encoded by the tmRNA and targeted for degradation. The ribosome is freed to recommence translation, which seems to be the essential function of trans-translation. The sequence is that of SsrA-binding protein from Ruthia magnifica subsp. Calyptogena magnifica.